The following is a 436-amino-acid chain: Exodeoxyribonuclease 7 large subunit (436 aa).

The tract at residues 412–436 (PGGVMNKNSNTTDSTDNTENGTGEA) is disordered. Residues 417–436 (NKNSNTTDSTDNTENGTGEA) show a composition bias toward low complexity.

It belongs to the XseA family. In terms of assembly, heterooligomer composed of large and small subunits.

The protein resides in the cytoplasm. The catalysed reaction is Exonucleolytic cleavage in either 5'- to 3'- or 3'- to 5'-direction to yield nucleoside 5'-phosphates.. Functionally, bidirectionally degrades single-stranded DNA into large acid-insoluble oligonucleotides, which are then degraded further into small acid-soluble oligonucleotides. The sequence is that of Exodeoxyribonuclease 7 large subunit from Corynebacterium jeikeium (strain K411).